The primary structure comprises 104 residues: MKLFAVFLLFCLVNQIYCRRSRSNTVEVTKKCKSGGKDTSMEKVEVEVSGSFYPTLELPDYCTHRRLDDDKCSKFCEHNCNPPFKRGVCGVWGDSQAGNCYCHT.

The N-terminal stretch at 1 to 18 is a signal peptide; sequence MKLFAVFLLFCLVNQIYC. Disulfide bonds link Cys32–Cys80, Cys62–Cys89, Cys72–Cys100, and Cys76–Cys102. Positions 92–94 match the Putative integrin attachment site; atypical (WGD) motif; it reads WGD.

Interacts with host integrin alpha-V/beta-3 (ITGAV:ITGB3).

The protein resides in the secreted. Functionally, inhibits proliferation, adhesion and migration of host cells as well as host angiogenesis by blocking host integrin alpha-V/beta-3 (ITGAV:ITGB3). The sequence is that of Salivary protein FS145 from Xenopsylla cheopis (Oriental rat flea).